Reading from the N-terminus, the 394-residue chain is MRSLSIFGATGSIGESTFDLVMRKGGPEAFRTVALTGGRNIRRLAEMARALKAELAVTAHEDCLPALREALAGTGTEVAGGAQAIAEAADRPADWTMSAIVGAAGLVPGMRALKHGRTLALANKESLVTAGQLLMRTAQENGATILPVDSEHSAVFQALAGEDTACVERVIITASGGPFRDWSLERIRACTVAEAQAHPNWSMGQRISIDSASMFNKALELIETREFFGFEPDRIEAVVHPQSIVHAMVGFCDGGLMAHLGPADMRHAIGFALNWPGRGEVPVARIDLAQIASLTFQKPDEERFPALRLARDVMAARGLSGAAFNAAKEIALDHFIAGRIGFLDMAAVVEETLAGVSTDPLFGKVPDALEEVLAMDHLARRAAEEAAGLRQQKR.

The NADPH site is built by T10, G11, S12, I13, G38, R39, N40, and N123. K124 contacts 1-deoxy-D-xylulose 5-phosphate. E125 lines the NADPH pocket. D149 contacts Mn(2+). The 1-deoxy-D-xylulose 5-phosphate site is built by S150, E151, S175, and H198. E151 serves as a coordination point for Mn(2+). G204 is an NADPH binding site. Residues S211, N216, K217, and E220 each contribute to the 1-deoxy-D-xylulose 5-phosphate site. E220 is a binding site for Mn(2+).

The protein belongs to the DXR family. Requires Mg(2+) as cofactor. It depends on Mn(2+) as a cofactor.

The enzyme catalyses 2-C-methyl-D-erythritol 4-phosphate + NADP(+) = 1-deoxy-D-xylulose 5-phosphate + NADPH + H(+). Its pathway is isoprenoid biosynthesis; isopentenyl diphosphate biosynthesis via DXP pathway; isopentenyl diphosphate from 1-deoxy-D-xylulose 5-phosphate: step 1/6. Its function is as follows. Catalyzes the NADPH-dependent rearrangement and reduction of 1-deoxy-D-xylulose-5-phosphate (DXP) to 2-C-methyl-D-erythritol 4-phosphate (MEP). The polypeptide is 1-deoxy-D-xylulose 5-phosphate reductoisomerase (Cereibacter sphaeroides (strain KD131 / KCTC 12085) (Rhodobacter sphaeroides)).